Reading from the N-terminus, the 332-residue chain is Phosphate acyltransferase (332 aa).

Belongs to the PlsX family. In terms of assembly, homodimer. Probably interacts with PlsY.

It localises to the cytoplasm. It carries out the reaction a fatty acyl-[ACP] + phosphate = an acyl phosphate + holo-[ACP]. It functions in the pathway lipid metabolism; phospholipid metabolism. Functionally, catalyzes the reversible formation of acyl-phosphate (acyl-PO(4)) from acyl-[acyl-carrier-protein] (acyl-ACP). This enzyme utilizes acyl-ACP as fatty acyl donor, but not acyl-CoA. The chain is Phosphate acyltransferase from Streptococcus sanguinis (strain SK36).